A 247-amino-acid chain; its full sequence is DNA polymerase sliding clamp (247 aa).

The protein belongs to the PCNA family. Homotrimer. The subunits circularize to form a toroid; DNA passes through its center. Replication factor C (RFC) is required to load the toroid on the DNA.

Its function is as follows. Sliding clamp subunit that acts as a moving platform for DNA processing. Responsible for tethering the catalytic subunit of DNA polymerase and other proteins to DNA during high-speed replication. In Thermofilum pendens (strain DSM 2475 / Hrk 5), this protein is DNA polymerase sliding clamp.